The sequence spans 253 residues: Ribosomal RNA small subunit methyltransferase A (253 aa).

S-adenosyl-L-methionine-binding residues include His-12, Leu-14, Gly-39, Glu-60, Asp-81, and Asn-104.

This sequence belongs to the class I-like SAM-binding methyltransferase superfamily. rRNA adenine N(6)-methyltransferase family. RsmA subfamily.

The protein resides in the cytoplasm. It catalyses the reaction adenosine(1518)/adenosine(1519) in 16S rRNA + 4 S-adenosyl-L-methionine = N(6)-dimethyladenosine(1518)/N(6)-dimethyladenosine(1519) in 16S rRNA + 4 S-adenosyl-L-homocysteine + 4 H(+). Its function is as follows. Specifically dimethylates two adjacent adenosines (A1518 and A1519) in the loop of a conserved hairpin near the 3'-end of 16S rRNA in the 30S particle. May play a critical role in biogenesis of 30S subunits. This is Ribosomal RNA small subunit methyltransferase A from Acidovorax ebreus (strain TPSY) (Diaphorobacter sp. (strain TPSY)).